The primary structure comprises 251 residues: Coenzyme F420:L-glutamate ligase (251 aa).

Residues 9 to 12 (LPEI), 38 to 39 (ST), and Lys-43 contribute to the GTP site. A divalent metal cation is bound at residue Asp-113. Asn-116 provides a ligand contact to GTP. Residues Asp-149, Thr-150, and Glu-207 each coordinate a divalent metal cation. 205–212 (AGEGDGGT) contacts GTP.

Belongs to the CofE family. Homodimer. Mg(2+) serves as cofactor. The cofactor is Mn(2+). K(+) is required as a cofactor.

The enzyme catalyses oxidized coenzyme F420-0 + GTP + L-glutamate = oxidized coenzyme F420-1 + GDP + phosphate + H(+). The catalysed reaction is oxidized coenzyme F420-1 + GTP + L-glutamate = oxidized coenzyme F420-2 + GDP + phosphate + H(+). Its pathway is cofactor biosynthesis; coenzyme F420 biosynthesis. Catalyzes the GTP-dependent successive addition of two or more gamma-linked L-glutamates to the L-lactyl phosphodiester of 7,8-didemethyl-8-hydroxy-5-deazariboflavin (F420-0) to form coenzyme F420-0-glutamyl-glutamate (F420-2) or polyglutamated F420 derivatives. This chain is Coenzyme F420:L-glutamate ligase, found in Halorubrum lacusprofundi (strain ATCC 49239 / DSM 5036 / JCM 8891 / ACAM 34).